The following is a 338-amino-acid chain: Lipoate-protein ligase A (338 aa).

The 188-residue stretch at 29-216 folds into the BPL/LPL catalytic domain; it reads PATQRVLFLW…AFFAHYGERI (188 aa). ATP-binding positions include Arg-71, 76–79, and Lys-134; that span reads GAVF. Lys-134 provides a ligand contact to (R)-lipoate.

The protein belongs to the LplA family. In terms of assembly, monomer.

Its subcellular location is the cytoplasm. The enzyme catalyses L-lysyl-[lipoyl-carrier protein] + (R)-lipoate + ATP = N(6)-[(R)-lipoyl]-L-lysyl-[lipoyl-carrier protein] + AMP + diphosphate + H(+). Its pathway is protein modification; protein lipoylation via exogenous pathway; protein N(6)-(lipoyl)lysine from lipoate: step 1/2. It participates in protein modification; protein lipoylation via exogenous pathway; protein N(6)-(lipoyl)lysine from lipoate: step 2/2. Functionally, catalyzes both the ATP-dependent activation of exogenously supplied lipoate to lipoyl-AMP and the transfer of the activated lipoyl onto the lipoyl domains of lipoate-dependent enzymes. In Salmonella typhi, this protein is Lipoate-protein ligase A.